The sequence spans 646 residues: Leukotriene A-4 hydrolase homolog (646 aa).

A peptide contacts are provided by residues 172 to 174 (QCQ) and 307 to 312 (PYGGME). His336 provides a ligand contact to Zn(2+). Glu337 functions as the Proton acceptor in the catalytic mechanism. Residues His340 and Glu359 each coordinate Zn(2+). Tyr424 serves as the catalytic Proton donor.

Belongs to the peptidase M1 family. Zn(2+) is required as a cofactor.

The protein localises to the cytoplasm. It is found in the nucleus. It catalyses the reaction leukotriene A4 + H2O = leukotriene B4. It participates in lipid metabolism; leukotriene B4 biosynthesis. Its function is as follows. Aminopeptidase that preferentially cleaves tripeptides. Also has low epoxide hydrolase activity (in vitro). Can hydrolyze an epoxide moiety of LTA(4) to form LTB(4) (in vitro). The sequence is that of Leukotriene A-4 hydrolase homolog from Botryotinia fuckeliana (strain B05.10) (Noble rot fungus).